The primary structure comprises 249 residues: Isoprenyl transferase (249 aa).

Residue Asp-25 is part of the active site. Asp-25 is a binding site for Mg(2+). Substrate is bound by residues 26 to 29 (GNGR), Trp-30, Arg-38, His-42, and 70 to 72 (STE). The active-site Proton acceptor is the Asn-73. Substrate contacts are provided by residues Trp-74, Arg-76, Arg-197, and 203 to 205 (RLS). Glu-216 contributes to the Mg(2+) binding site.

This sequence belongs to the UPP synthase family. As to quaternary structure, homodimer. The cofactor is Mg(2+).

Catalyzes the condensation of isopentenyl diphosphate (IPP) with allylic pyrophosphates generating different type of terpenoids. The polypeptide is Isoprenyl transferase (Streptococcus pyogenes serotype M1).